The following is a 322-amino-acid chain: MSGELPPNINIKEPRWDQSTFVGRANHFFTVTDPRNILLTNEQLENARKVVHDYRQGIVPPGLTENELWRAKYIYDSAFHPDTGEKMILIGRMSAQVPMNMTITGCMMTFYRTTPAVLFWQWINQSFNAVVNYTNRSGDAPLTVNELGTAYVSATTGAVATALGLNALTKHVSPLIGRFVPFAAVAAANCINIPLMRQRELRAGIPVTDENGNRLGESANAAKQAITQVVISRILMAAPGMAIPPFIMNTLEKKAFLKRFPWMSAPIQVGLVGFCLVFATPLCCALFPQKSSMSVTSLEAELQAKIRETSPELRRVYFNKGL.

Ser-2 is modified (N-acetylserine). Residues 2 to 102 (SGELPPNINI…MSAQVPMNMT (101 aa)) lie on the Mitochondrial matrix side of the membrane. A helical membrane pass occupies residues 103–120 (ITGCMMTFYRTTPAVLFW). At 121–146 (QWINQSFNAVVNYTNRSGDAPLTVNE) the chain is on the mitochondrial intermembrane side. The helical transmembrane segment at 147–167 (LGTAYVSATTGAVATALGLNA) threads the bilayer. The Mitochondrial matrix segment spans residues 168 to 174 (LTKHVSP). The chain crosses the membrane as a helical span at residues 175 to 195 (LIGRFVPFAAVAAANCINIPL). Residues 196–228 (MRQRELRAGIPVTDENGNRLGESANAAKQAITQ) lie on the Mitochondrial intermembrane side of the membrane. Residues 229–249 (VVISRILMAAPGMAIPPFIMN) traverse the membrane as a helical segment. At 250-266 (TLEKKAFLKRFPWMSAP) the chain is on the mitochondrial matrix side. The chain crosses the membrane as a helical span at residues 267–287 (IQVGLVGFCLVFATPLCCALF). The Mitochondrial intermembrane portion of the chain corresponds to 288-322 (PQKSSMSVTSLEAELQAKIRETSPELRRVYFNKGL).

The protein belongs to the sideroflexin family.

The protein localises to the mitochondrion inner membrane. The enzyme catalyses L-serine(in) = L-serine(out). The catalysed reaction is L-alanine(in) = L-alanine(out). It catalyses the reaction L-cysteine(in) = L-cysteine(out). In terms of biological role, amino acid transporter importing serine, an essential substrate of the mitochondrial branch of the one-carbon pathway, into mitochondria. Mitochondrial serine is then converted to glycine and formate, which exits to the cytosol where it is used to generate the charged folates that serve as one-carbon donors. May also transport other amino acids including alanine and cysteine. The protein is Sideroflexin-1 (SFXN1) of Sus scrofa (Pig).